We begin with the raw amino-acid sequence, 193 residues long: Segregation and condensation protein B (193 aa).

The protein belongs to the ScpB family. In terms of assembly, homodimer. Homodimerization may be required to stabilize the binding of ScpA to the Smc head domains. Component of a cohesin-like complex composed of ScpA, ScpB and the Smc homodimer, in which ScpA and ScpB bind to the head domain of Smc. The presence of the three proteins is required for the association of the complex with DNA.

It localises to the cytoplasm. Participates in chromosomal partition during cell division. May act via the formation of a condensin-like complex containing Smc and ScpA that pull DNA away from mid-cell into both cell halves. This is Segregation and condensation protein B from Clostridium botulinum (strain ATCC 19397 / Type A).